The sequence spans 167 residues: Gametocyte-specific factor 1 (167 aa).

The residue at position 8 (serine 8) is a Phosphoserine. 2 CHHC U11-48K-type zinc fingers span residues 14 to 41 (LLQC…RKNH) and 48 to 75 (LATC…DDKS). Cysteine 17, histidine 23, histidine 33, cysteine 37, cysteine 51, histidine 57, histidine 67, and cysteine 71 together coordinate Zn(2+).

It belongs to the UPF0224 (FAM112) family. Expressed abundantly in adult testis, at moderate levels in unfertilized eggs and ovaries and weakly in embryonic stem cells.

It localises to the cytoplasm. Functionally, required for spermatogenesis and is involved in the suppression of retrotransposon transcription in male germ cells. This is Gametocyte-specific factor 1 from Mus musculus (Mouse).